The sequence spans 554 residues: uncharacterized protein (554 aa).

5 helical membrane-spanning segments follow: residues 13-31 (SVAH…GVYL), 36-58 (IFGV…HFGF), 73-92 (LILF…FSSF), 99-121 (LNLL…YYLW), and 161-183 (IALG…IIAI). 2 consecutive RCK C-terminal domains span residues 199-281 (KTQS…FIGK) and 282-366 (EVEL…VLGN). 4 helical membrane passes run 376 to 395 (IVTI…LPIA), 405 to 422 (LGLA…GRFG), 442 to 464 (IGIV…QTVV), and 468 to 490 (GLLY…GAIA).

It belongs to the AAE transporter (TC 2.A.81) family.

It localises to the cell membrane. This is an uncharacterized protein from Bacteroides thetaiotaomicron (strain ATCC 29148 / DSM 2079 / JCM 5827 / CCUG 10774 / NCTC 10582 / VPI-5482 / E50).